The following is a 974-amino-acid chain: Serine/threonine-protein kinase 10 (974 aa).

The 259-residue stretch at 37–295 folds into the Protein kinase domain; sequence WEIIGELGDG…AAQLLEHPFV (259 aa). Residues 43-51 and K66 contribute to the ATP site; that span reads LGDGAFGKV. The active-site Proton acceptor is the D158. Positions 320 to 332 are enriched in acidic residues; sequence EDNHEDGEDEDPA. The disordered stretch occupies residues 320–479; it reads EDNHEDGEDE…EKEDHCEETQ (160 aa). Over residues 343 to 353 the composition is skewed to polar residues; it reads DPSQTSATSLN. Composition is skewed to basic and acidic residues over residues 382-406 and 458-477; these read PLKE…ESEA and TMEK…HCEE. Coiled-coil stretches lie at residues 605–729 and 870–950; these read QKEQ…EEQK and EKVK…EHLK.

This sequence belongs to the protein kinase superfamily. STE Ser/Thr protein kinase family. STE20 subfamily. Homodimer. Post-translationally, autophosphorylates.

It is found in the cell membrane. The enzyme catalyses L-seryl-[protein] + ATP = O-phospho-L-seryl-[protein] + ADP + H(+). It carries out the reaction L-threonyl-[protein] + ATP = O-phospho-L-threonyl-[protein] + ADP + H(+). May act as a polo kinase kinase by mediating phosphorylation of plk1. This chain is Serine/threonine-protein kinase 10 (stk10), found in Danio rerio (Zebrafish).